Consider the following 190-residue polypeptide: Glutathione peroxidase 2 (190 aa).

Selenocysteine 40 is an active-site residue. Selenocysteine 40 is a non-standard amino acid (selenocysteine).

This sequence belongs to the glutathione peroxidase family. Homotetramer.

It localises to the cytoplasm. The protein localises to the cytosol. It carries out the reaction 2 glutathione + H2O2 = glutathione disulfide + 2 H2O. The enzyme catalyses a hydroperoxy polyunsaturated fatty acid + 2 glutathione = a hydroxy polyunsaturated fatty acid + glutathione disulfide + H2O. The catalysed reaction is tert-butyl hydroperoxide + 2 glutathione = tert-butanol + glutathione disulfide + H2O. It catalyses the reaction cumene hydroperoxide + 2 glutathione = 2-phenylpropan-2-ol + glutathione disulfide + H2O. It carries out the reaction (13S)-hydroperoxy-(9Z,11E)-octadecadienoate + 2 glutathione = (13S)-hydroxy-(9Z,11E)-octadecadienoate + glutathione disulfide + H2O. The enzyme catalyses (5S)-hydroperoxy-(6E,8Z,11Z,14Z)-eicosatetraenoate + 2 glutathione = (5S)-hydroxy-(6E,8Z,11Z,14Z)-eicosatetraenoate + glutathione disulfide + H2O. The catalysed reaction is (12R)-hydroperoxy-(5Z,8Z,10E,14Z)-eicosatetraenoate + 2 glutathione = (12R)-hydroxy-(5Z,8Z,10E,14Z)-eicosatetraenoate + glutathione disulfide + H2O. It catalyses the reaction (15S)-hydroperoxy-(5Z,8Z,11Z,13E)-eicosatetraenoate + 2 glutathione = (15S)-hydroxy-(5Z,8Z,11Z,13E)-eicosatetraenoate + glutathione disulfide + H2O. Catalyzes the reduction of hydroperoxides in a glutathione-dependent manner thus regulating cellular redox homeostasis. Can reduce small soluble hydroperoxides such as H2O2, cumene hydroperoxide and tert-butyl hydroperoxide, as well as several fatty acid-derived hydroperoxides. Cannot reduce phosphatidycholine hydroperoxide. The protein is Glutathione peroxidase 2 (GPX2) of Pongo pygmaeus (Bornean orangutan).